Consider the following 259-residue polypeptide: 5'-nucleotidase SurE (259 aa).

Residues Asp8, Asp9, Ser40, and Asn92 each contribute to the a divalent metal cation site.

The protein belongs to the SurE nucleotidase family. Requires a divalent metal cation as cofactor.

Its subcellular location is the cytoplasm. The enzyme catalyses a ribonucleoside 5'-phosphate + H2O = a ribonucleoside + phosphate. In terms of biological role, nucleotidase that shows phosphatase activity on nucleoside 5'-monophosphates. The polypeptide is 5'-nucleotidase SurE (Xanthomonas campestris pv. campestris (strain 8004)).